Reading from the N-terminus, the 70-residue chain is UPF0270 protein VV1_1320 (70 aa).

It belongs to the UPF0270 family.

The chain is UPF0270 protein VV1_1320 from Vibrio vulnificus (strain CMCP6).